The chain runs to 494 residues: Probable cytosol aminopeptidase (494 aa).

Mn(2+)-binding residues include Lys260 and Asp265. The active site involves Lys272. 3 residues coordinate Mn(2+): Asp283, Asp342, and Glu344. Arg346 is a catalytic residue.

The protein belongs to the peptidase M17 family. Requires Mn(2+) as cofactor.

The protein localises to the cytoplasm. The enzyme catalyses Release of an N-terminal amino acid, Xaa-|-Yaa-, in which Xaa is preferably Leu, but may be other amino acids including Pro although not Arg or Lys, and Yaa may be Pro. Amino acid amides and methyl esters are also readily hydrolyzed, but rates on arylamides are exceedingly low.. The catalysed reaction is Release of an N-terminal amino acid, preferentially leucine, but not glutamic or aspartic acids.. Presumably involved in the processing and regular turnover of intracellular proteins. Catalyzes the removal of unsubstituted N-terminal amino acids from various peptides. The sequence is that of Probable cytosol aminopeptidase from Bacillus cereus (strain ATCC 14579 / DSM 31 / CCUG 7414 / JCM 2152 / NBRC 15305 / NCIMB 9373 / NCTC 2599 / NRRL B-3711).